Consider the following 711-residue polypeptide: Putative membrane protein IgaA homolog (711 aa).

Position 1 (Met-1) is a topological domain, periplasmic. Residues 2 to 22 traverse the membrane as a helical segment; the sequence is STIVIFLAALLACSLLAGWLI. Residues 23 to 204 lie on the Cytoplasmic side of the membrane; the sequence is KVRSRRRQLP…YALSRPRGLR (182 aa). The next 2 membrane-spanning stretches (helical) occupy residues 205 to 225 and 226 to 246; these read EALL…TPDV and FVPW…WGLF. At 247–339 the chain is on the cytoplasmic side; the sequence is APPAKSSLRE…KNFPLQHWLR (93 aa). A helical membrane pass occupies residues 340–360; that stretch reads STIIAAGSLLVLFMLLFWIPL. Topologically, residues 361–655 are periplasmic; it reads DMPLKFTLSW…IPDRSGLWRY (295 aa). Residues 656-676 traverse the membrane as a helical segment; it reads LSTTLLLLTMLGSAIYNGVQA. Over 677 to 711 the chain is Cytoplasmic; sequence WRRYQRHRTRMMEIQAYYESCLNPQLITPSESLIE.

Belongs to the IgaA family.

The protein localises to the cell inner membrane. This chain is Putative membrane protein IgaA homolog (yrfF), found in Escherichia coli (strain K12).